The following is a 393-amino-acid chain: MSGDFDTIRDASSPDEVQLVRLLEEKIKSLQIEIENLRKELNYYKAEMEKMLSPPLIEAVVLDVLPDGRVLVRSSSGPNLVVNIASHIDQKLIKPGISVALNQRGSTILEVLPQKEDPIVKTMEIIERPNVTYSEIGGLEEQIRELREVVELPLKNPEIFREIGVEPPKGVLLYGPPGTGKTMLAKAVATESNAVFIHVVASEFAQKFVGEGARIVRELFEMAKRKAPSIIFIDEIDAIGAKRIDIGTSGEREIQRTLMQLLAELDGFDPLDNVKIIAATNRIDILDPALLRPGRFDRIIEVPLPDFKGRTEIFNIYLKKMKIEDNINLELLSQLTEGFSGADIKNVCVEAAYMAIRDGRNKVTMNDLVEAINKINVKRNKMESMKERREKYS.

Positions 15–53 (DEVQLVRLLEEKIKSLQIEIENLRKELNYYKAEMEKMLS) form a coiled coil. Residues 178-183 (GTGKTM) and Tyr317 each bind ATP. The stretch at 365–393 (MNDLVEAINKINVKRNKMESMKERREKYS) forms a coiled coil. The interval 391 to 393 (KYS) is docks into pockets in the proteasome alpha-ring to cause gate opening.

The protein belongs to the AAA ATPase family. In terms of assembly, homohexamer. The hexameric complex has a two-ring architecture resembling a top hat that caps the 20S proteasome core at one or both ends. Upon ATP-binding, the C-terminus of PAN interacts with the alpha-rings of the proteasome core by binding to the intersubunit pockets.

Its subcellular location is the cytoplasm. ATPase which is responsible for recognizing, binding, unfolding and translocation of substrate proteins into the archaeal 20S proteasome core particle. Is essential for opening the gate of the 20S proteasome via an interaction with its C-terminus, thereby allowing substrate entry and access to the site of proteolysis. Thus, the C-termini of the proteasomal ATPase function like a 'key in a lock' to induce gate opening and therefore regulate proteolysis. Unfolding activity requires energy from ATP hydrolysis, whereas ATP binding alone promotes ATPase-20S proteasome association which triggers gate opening, and supports translocation of unfolded substrates. In Saccharolobus solfataricus (strain ATCC 35092 / DSM 1617 / JCM 11322 / P2) (Sulfolobus solfataricus), this protein is Proteasome-activating nucleotidase.